We begin with the raw amino-acid sequence, 484 residues long: Glutathione reductase (484 aa).

Residues Ser32 and Gly33 each coordinate FAD. Ser32 contacts glutathione. Arg39 contacts glutathione. Residues Glu52, Thr59, Cys60, and Lys68 each coordinate FAD. The cysteines at positions 60 and 65 are disulfide-linked. Glutathione is bound at residue Tyr122. Ala138 is an FAD binding site. The NADP(+) site is built by Ala204, Ile207, Glu210, Arg227, and Arg233. Residue Thr242 coordinates glutathione. An NADP(+)-binding site is contributed by Gly293. FAD is bound at residue Asp333. An NADP(+)-binding site is contributed by Glu339. Thr341 contributes to the FAD binding site. Position 349 (Arg349) interacts with glutathione. Val374 lines the NADP(+) pocket. Lys426 is a binding site for glutathione. FAD is bound at residue His473. The Proton acceptor role is filled by His473.

This sequence belongs to the class-I pyridine nucleotide-disulfide oxidoreductase family. In terms of assembly, homodimer. The cofactor is FAD.

The protein localises to the cytoplasm. The protein resides in the mitochondrion. The catalysed reaction is 2 glutathione + NADP(+) = glutathione disulfide + NADPH + H(+). Functionally, catalyzes the reduction of glutathione disulfide (GSSG) to reduced glutathione (GSH). Constitutes the major mechanism to maintain a high GSH:GSSG ratio in the cytosol. In Kluyveromyces lactis (strain ATCC 8585 / CBS 2359 / DSM 70799 / NBRC 1267 / NRRL Y-1140 / WM37) (Yeast), this protein is Glutathione reductase (GLR1).